A 395-amino-acid chain; its full sequence is MCDQTFLAITFGPCDKCSENKPLMNIYLKNEPINYCSLCVEMMACQGLAKGETVQSLKAESESLKAKLEEERAKLHDVELHQVAEKMEALGQFVMKTRRTLKGHGNKVLCMDWCRDKRRIVSSSQDGKVIVWDAYTTNKEHAVTMPCTWVMACAYAPSGCAVACGGLDNKCSVYPLSLDKNENLASKKKSVAMHTNYLSSCSFTKSDMQILTSSGDGTCALWDVESGQLLQSFHGHSADVLSLDLAPSETGSTFVSGGCDKKANVWDMRSGQNVQSFETHDSDINSVKYYPSGDAFASGSDDATCRLYDLRADREVAIYSKDSIIFGASSVDFSLSGRLLFAGYNDYNINVWDVLKGTRVAILFGHENRVSTVRVSPDGTAFCSGSWDNTLRIWA.

7 WD repeats span residues 103-142 (GHGNKVLCMDWCRDKRRIVSSSQDGKVIVWDAYTTNKEHA), 145-184 (MPCTWVMACAYAPSGCAVACGGLDNKCSVYPLSLDKNENL), 193-234 (MHTN…QSFH), 235-276 (GHSA…NVQS), 279-318 (THDSDINSVKYYPSGDAFASGSDDATCRLYDLRADREVAI), 320-362 (SKDS…RVAI), and 365-395 (GHENRVSTVRVSPDGTAFCSGSWDNTLRIWA).

The protein belongs to the WD repeat G protein beta family. May interact with RGS9; this interaction stabilizes both proteins and increases RGS9 GTPase-activating protein (GAP) activity, hence accelerating the deactivation of D(2) dopamine receptor-mediated signaling.

Its subcellular location is the membrane. In terms of biological role, enhances GTPase-activating protein (GAP) activity of regulator of G protein signaling (RGS) proteins, such as RGS7 and RGS9, hence involved in the termination of the signaling initiated by the G protein coupled receptors (GPCRs) by accelerating the GTP hydrolysis on the G-alpha subunits, thereby promoting their inactivation. Increases RGS7 GTPase-activating protein (GAP) activity, thereby regulating mood and cognition. Increases RGS9 GTPase-activating protein (GAP) activity, hence contributes to the deactivation of G protein signaling initiated by D(2) dopamine receptors. Along with gnb5a, plays an important role in neuronal signaling, including in the parasympathetic, but not sympathetic, control of heart rate. The polypeptide is Guanine nucleotide-binding protein subunit beta-5b (Danio rerio (Zebrafish)).